The chain runs to 378 residues: Zinc finger protein DPF3 (378 aa).

Lysine 99 participates in a covalent cross-link: Glycyl lysine isopeptide (Lys-Gly) (interchain with G-Cter in SUMO2). Positions 146 to 193 are disordered; it reads LENDENVEEGNEEEDLEEDVPKRKNRTRGRARGSAGGRRRHDAASQED. Over residues 148–163 the composition is skewed to acidic residues; it reads NDENVEEGNEEEDLEE. A compositionally biased stretch (basic residues) spans 168 to 186; it reads RKNRTRGRARGSAGGRRRH. The C2H2-type zinc-finger motif lies at 198–221; the sequence is YVCDICGKRYKNRPGLSYHYAHTH. The tract at residues 225 to 254 is disordered; the sequence is EEGDEAQDQETRSPPNHRNENHRPQKGPDG. 2 PHD-type zinc fingers span residues 259–319 and 316–366; these read NNYC…CKSC and CKSC…CWEL. Residues 317–332 are interaction with HDGFL2; it reads KSCILCGTSENDDQLL. The residue at position 323 (glycine 323) is a Phosphoserine.

The protein belongs to the requiem/DPF family. Component of the BAF complex, which includes at least actin (ACTB), ARID1A, ARID1B/BAF250, SMARCA2, SMARCA4/BRG1/BAF190A, ACTL6A/BAF53, ACTL6B/BAF53B, SMARCE1/BAF57, SMARCC1/BAF155, SMARCC2/BAF170, SMARCB1/SNF5/INI1, and one or more of SMARCD1/BAF60A, SMARCD2/BAF60B, or SMARCD3/BAF60C. In muscle cells, the BAF complex also contains DPF3. Interacts with acetylated histones H3 and H4. Component of neuron-specific chromatin remodeling complex (nBAF complex) composed of at least, ARID1A/BAF250A or ARID1B/BAF250B, SMARCD1/BAF60A, SMARCD3/BAF60C, SMARCA2/BRM/BAF190B, SMARCA4/BRG1/BAF190A, SMARCB1/BAF47, SMARCC1/BAF155, SMARCE1/BAF57, SMARCC2/BAF170, DPF1/BAF45B, DPF3/BAF45C, ACTL6B/BAF53B and actin. As to quaternary structure, interacts with HDGFL2. Interacts with SMARCA4/BRG1/BAF190A, SMARCC1/BAF155 and SMARCD1/BAF60A. In terms of tissue distribution, expressed in the heart and somites. Expressed in cerebellum and spinal cord, but not in cerebral cortex. Expressed specifically in post-mitotic neurons (at protein level).

The protein resides in the nucleus. Functionally, muscle-specific component of the BAF complex, a multiprotein complex involved in transcriptional activation and repression of select genes by chromatin remodeling (alteration of DNA-nucleosome topology). Specifically binds acetylated lysines on histone 3 and 4 (H3K14ac, H3K9ac, H4K5ac, H4K8ac, H4K12ac, H4K16ac). In the complex, it acts as a tissue-specific anchor between histone acetylations and methylations and chromatin remodeling. It thereby probably plays an essential role in heart and skeletal muscle development. Belongs to the neuron-specific chromatin remodeling complex (nBAF complex). During neural development a switch from a stem/progenitor to a post-mitotic chromatin remodeling mechanism occurs as neurons exit the cell cycle and become committed to their adult state. The transition from proliferating neural stem/progenitor cells to post-mitotic neurons requires a switch in subunit composition of the npBAF and nBAF complexes. As neural progenitors exit mitosis and differentiate into neurons, npBAF complexes which contain ACTL6A/BAF53A and PHF10/BAF45A, are exchanged for homologous alternative ACTL6B/BAF53B and DPF1/BAF45B or DPF3/BAF45C subunits in neuron-specific complexes (nBAF). The npBAF complex is essential for the self-renewal/proliferative capacity of the multipotent neural stem cells. The nBAF complex along with CREST plays a role regulating the activity of genes essential for dendrite growth. In terms of biological role, acts as a regulator of myogenesis in cooperation with HDGFL2. Mediates the interaction of HDGFL2 with the BAF complex. HDGFL2-DPF3a activate myogenic genes by increasing chromatin accessibility through recruitment of SMARCA4/BRG1/BAF190A (ATPase subunit of the BAF complex) to myogenic gene promoters. The protein is Zinc finger protein DPF3 (Dpf3) of Mus musculus (Mouse).